The primary structure comprises 186 residues: Prorelaxin 1 (186 aa).

The N-terminal stretch at 1–22 is a signal peptide; the sequence is MSSRLLLQLLGFWLFLSQPCRA. 3 disulfide bridges follow: Cys-36/Cys-173, Cys-48/Cys-186, and Cys-172/Cys-177. A propeptide spans 58-158 (connecting peptide); it reads SQEEPAPLAR…LKYLGSDAQS (101 aa). A Pyrrolidone carboxylic acid modification is found at Gln-163.

The protein belongs to the insulin family. Heterodimer of a B chain and an A chain linked by two disulfide bonds.

The protein localises to the secreted. Relaxin is an ovarian hormone that acts with estrogen to produce dilatation of the birth canal in many mammals. In Rattus norvegicus (Rat), this protein is Prorelaxin 1 (Rln1).